The following is a 185-amino-acid chain: MIYETLVLSKTELEQLNVDLPRYSYRFRYSRSIGDTVVEFPGTLSDPCIPVVDVLLGACWAWPQPSRHGGLGLDDIDPFDASFSCCVTSPERYCLSRSVLSGVDAFVVRGSCKLCGLGFLDNFNPFEIRALLGQTTPGLWWQPVKPVYDDRNIHLPYDSELNARIQRFQYTCRECIVRVAFHMSS.

In terms of biological role, transports viral genome to neighboring plant cells directly through plasmosdesmata, without any budding. The movement protein allows efficient cell to cell propagation, by bypassing the host cell wall barrier (Potential). Likely acts as a suppressor of RNA-mediated gene silencing, also known as post-transcriptional gene silencing (PTGS), a mechanism of plant viral defense that performs sequence-specific inhibition of viral mRNAs expression. This chain is Movement protein P1, found in Glycine max (Soybean).